A 351-amino-acid chain; its full sequence is RCC1 repeat-containing protein C10F6.04 (351 aa).

RCC1 repeat units follow at residues methionine 1–glutamate 48, serine 50–alanine 106, arginine 108–asparagine 162, and glutamate 163–glutamate 212.

It is found in the cytoplasm. The protein localises to the nucleus. In Schizosaccharomyces pombe (strain 972 / ATCC 24843) (Fission yeast), this protein is RCC1 repeat-containing protein C10F6.04.